Consider the following 341-residue polypeptide: UDP-N-acetylenolpyruvoylglucosamine reductase (341 aa).

One can recognise an FAD-binding PCMH-type domain in the interval 13 to 185 (FGVEQSCLSM…TAVGLRLPKA (173 aa)). The active site involves Arg161. Ser231 acts as the Proton donor in catalysis. Glu327 is an active-site residue.

It belongs to the MurB family. FAD is required as a cofactor.

The protein localises to the cytoplasm. The catalysed reaction is UDP-N-acetyl-alpha-D-muramate + NADP(+) = UDP-N-acetyl-3-O-(1-carboxyvinyl)-alpha-D-glucosamine + NADPH + H(+). It participates in cell wall biogenesis; peptidoglycan biosynthesis. In terms of biological role, cell wall formation. This is UDP-N-acetylenolpyruvoylglucosamine reductase from Shewanella sp. (strain MR-4).